Reading from the N-terminus, the 594-residue chain is KIF-binding protein (594 aa).

The protein belongs to the KIF-binding protein family.

The protein resides in the cytoplasm. It localises to the cytoskeleton. Functionally, activator of KIF1B plus-end-directed microtubule motor activity. Required for organization of axonal microtubules, and axonal outgrowth and maintenance during peripheral and central nervous system development. The sequence is that of KIF-binding protein (Kifbp) from Gallus gallus (Chicken).